We begin with the raw amino-acid sequence, 530 residues long: Carbohydrate sulfotransferase 2 (530 aa).

Residues 1–20 (MSRSSPRALPPGALPRPLPA) form a disordered region. Residues 1–54 (MSRSSPRALPPGALPRPLPAAPAAVQRALLPPWPRRAGRRWPASPLGMKVFRRK) lie on the Cytoplasmic side of the membrane. Positions 8–20 (ALPPGALPRPLPA) are enriched in pro residues. Residues 55–75 (ALVLCAGYALLLVLTMLNLLD) traverse the membrane as a helical; Signal-anchor for type II membrane protein segment. Residues 76–530 (YKWHKEPLQQ…SKTLLRKPRL (455 aa)) lie on the Lumenal side of the membrane. Residues 97–128 (GAAGAGWGRPGSPPAAPPRAHSRMDPRTPYRP) are disordered. Position 173 to 179 (173 to 179 (WRSGSSF)) interacts with 3'-phosphoadenylyl sulfate. Asn-243 carries N-linked (GlcNAc...) asparagine glycosylation. 332–340 (RDPRAVASS) provides a ligand contact to 3'-phosphoadenylyl sulfate. 2 N-linked (GlcNAc...) asparagine glycosylation sites follow: Asn-457 and Asn-475.

This sequence belongs to the sulfotransferase 1 family. Gal/GlcNAc/GalNAc subfamily. As to quaternary structure, homodimer; disulfide-linked. Homodimerization is not essential for enzyme activity. In brain, it is expressed in pyramidal cells in the CA3 subregion of the hippocampus, cerebellar nucleus and Purkinje cells. Expressed in peripheral lymph nodes.

The protein resides in the golgi apparatus. It localises to the trans-Golgi network membrane. The catalysed reaction is 3-O-{N-acetyl-beta-D-glucosaminyl-(1-&gt;3)-beta-D-galactosyl-(1-&gt;3)-N-acetyl-alpha-D-galactosaminyl}-L-threonyl-[protein] + 3'-phosphoadenylyl sulfate = 3-O-{6-O-sulfo-N-acetyl-beta-D-glucosaminyl-(1-&gt;3)-beta-D-galactosyl-(1-&gt;3)-N-acetyl-alpha-D-galactosaminyl}-L-threonyl-[protein] + adenosine 3',5'-bisphosphate + H(+). The enzyme catalyses 3-O-{N-acetyl-beta-D-glucosaminyl-(1-&gt;3)-beta-D-galactosyl-(1-&gt;3)-N-acetyl-alpha-D-galactosaminyl}-L-seryl-[protein] + 3'-phosphoadenylyl sulfate = 3-O-{6-O-sulfo-N-acetyl-beta-D-glucosaminyl-(1-&gt;3)-beta-D-galactosyl-(1-&gt;3)-N-acetyl-alpha-D-galactosaminyl}-L-seryl-[protein] + adenosine 3',5'-bisphosphate + H(+). It carries out the reaction a 3-O-{beta-D-galactosyl-(1-&gt;3)-[N-acetyl-beta-D-glucosaminyl-(1-&gt;6)]-N-acetyl-alpha-D-galactosaminyl}-L-threonyl-[protein] + 3'-phosphoadenylyl sulfate = 3-O-{beta-D-galactosyl-(1-&gt;3)-[6-O-sulfo-N-acetyl-beta-D-glucosaminyl-(1-&gt;6)]-N-acetyl-alpha-D-galactosaminyl}-L-threonyl-[protein] + adenosine 3',5'-bisphosphate + H(+). It catalyses the reaction 3-O-{beta-D-galactosyl-(1-&gt;3)-[N-acetyl-beta-D-glucosaminyl-(1-&gt;6)]-N-acetyl-alpha-D-galactosaminyl}-L-seryl-[protein] + 3'-phosphoadenylyl sulfate = 3-O-{beta-D-galactosyl-(1-&gt;3)-[6-O-sulfo-N-acetyl-beta-D-glucosaminyl-(1-&gt;6)]-N-acetyl-alpha-D-galactosaminyl}-L-seryl-[protein] + adenosine 3',5'-bisphosphate + H(+). The protein operates within protein modification; carbohydrate sulfation. Sulfotransferase that utilizes 3'-phospho-5'-adenylyl sulfate (PAPS) as sulfonate donor to catalyze the transfer of sulfate to position 6 of non-reducing N-acetylglucosamine (GlcNAc) residues within keratan-like structures on N-linked glycans and within mucin-associated glycans that can ultimately serve as SELL ligands. SELL ligands are present in high endothelial cells (HEVs) and play a central role in lymphocyte homing at sites of inflammation. Participates in biosynthesis of the SELL ligand sialyl 6-sulfo Lewis X and in lymphocyte homing to Peyer patches. Has no activity toward O-linked sugars. Its substrate specificity may be influenced by its subcellular location. Sulfates GlcNAc residues at terminal, non-reducing ends of oligosaccharide chains. The protein is Carbohydrate sulfotransferase 2 (Chst2) of Mus musculus (Mouse).